A 148-amino-acid polypeptide reads, in one-letter code: MKVILLEELEGRGSFGDIITVKDGFANNYLIPRKLALPATEGNIKHIQSILSQKARKLEKIRTQAQELAKKLDGAEITIKKPVGQNGKLFGAITTSDIAKALNEKGFNVDKKQIIISSPIKNLGLYTIKVRLHNDIYASIKVNVEEQK.

This sequence belongs to the bacterial ribosomal protein bL9 family.

Functionally, binds to the 23S rRNA. The sequence is that of Large ribosomal subunit protein bL9 from Hydrogenobaculum sp. (strain Y04AAS1).